The primary structure comprises 248 residues: tRNA (guanine-N(1)-)-methyltransferase (248 aa).

Residues G116 and 136-141 (VGDYVL) each bind S-adenosyl-L-methionine.

It belongs to the RNA methyltransferase TrmD family. Homodimer.

It localises to the cytoplasm. The catalysed reaction is guanosine(37) in tRNA + S-adenosyl-L-methionine = N(1)-methylguanosine(37) in tRNA + S-adenosyl-L-homocysteine + H(+). Specifically methylates guanosine-37 in various tRNAs. In Psychromonas ingrahamii (strain DSM 17664 / CCUG 51855 / 37), this protein is tRNA (guanine-N(1)-)-methyltransferase.